Consider the following 460-residue polypeptide: Kynureninase (460 aa).

Pyridoxal 5'-phosphate-binding positions include leucine 116, threonine 117, 144–147, serine 199, aspartate 228, histidine 231, and tyrosine 253; that span reads FPSD. Residue lysine 254 is modified to N6-(pyridoxal phosphate)lysine. Pyridoxal 5'-phosphate contacts are provided by tryptophan 288 and asparagine 316.

This sequence belongs to the kynureninase family. Homodimer. The cofactor is pyridoxal 5'-phosphate.

It localises to the cytoplasm. The enzyme catalyses L-kynurenine + H2O = anthranilate + L-alanine + H(+). The catalysed reaction is 3-hydroxy-L-kynurenine + H2O = 3-hydroxyanthranilate + L-alanine + H(+). It participates in amino-acid degradation; L-kynurenine degradation; L-alanine and anthranilate from L-kynurenine: step 1/1. The protein operates within cofactor biosynthesis; NAD(+) biosynthesis; quinolinate from L-kynurenine: step 2/3. Its function is as follows. Catalyzes the cleavage of L-kynurenine (L-Kyn) and L-3-hydroxykynurenine (L-3OHKyn) into anthranilic acid (AA) and 3-hydroxyanthranilic acid (3-OHAA), respectively. The sequence is that of Kynureninase from Debaryomyces hansenii (strain ATCC 36239 / CBS 767 / BCRC 21394 / JCM 1990 / NBRC 0083 / IGC 2968) (Yeast).